The chain runs to 544 residues: Chaperonin GroEL (544 aa).

ATP-binding positions include Thr29–Pro32, Asp86–Thr90, Gly413, Asn476–Ala478, and Asp492.

The protein belongs to the chaperonin (HSP60) family. In terms of assembly, forms a cylinder of 14 subunits composed of two heptameric rings stacked back-to-back. Interacts with the co-chaperonin GroES.

The protein localises to the cytoplasm. The catalysed reaction is ATP + H2O + a folded polypeptide = ADP + phosphate + an unfolded polypeptide.. Functionally, together with its co-chaperonin GroES, plays an essential role in assisting protein folding. The GroEL-GroES system forms a nano-cage that allows encapsulation of the non-native substrate proteins and provides a physical environment optimized to promote and accelerate protein folding. This is Chaperonin GroEL from Bacillus licheniformis (strain ATCC 14580 / DSM 13 / JCM 2505 / CCUG 7422 / NBRC 12200 / NCIMB 9375 / NCTC 10341 / NRRL NRS-1264 / Gibson 46).